A 530-amino-acid chain; its full sequence is Lanosterol 14-alpha demethylase CYP51 (530 aa).

Residues 1-20 (MSATKSIVGEALEYVNIGLS) are Lumenal-facing. Residues 21 to 41 (HFLALPLAQRISLIIIIPFIY) form a helical membrane-spanning segment. The Cytoplasmic segment spans residues 42 to 530 (NIVWQLLYSL…WEKRNPEQKI (489 aa)). Lysine 116 is covalently cross-linked (Glycyl lysine isopeptide (Lys-Gly) (interchain with G-Cter in ubiquitin)). Tyrosine 126 is a binding site for lanosterol. Glycine 314 serves as a coordination point for itraconazole. Glycyl lysine isopeptide (Lys-Gly) (interchain with G-Cter in ubiquitin) cross-links involve residues lysine 353 and lysine 454. A Phosphoserine modification is found at serine 458. Heme is bound at residue cysteine 470.

Belongs to the cytochrome P450 family. As to quaternary structure, interacts with ERG28. Heme serves as cofactor.

The protein localises to the endoplasmic reticulum membrane. It carries out the reaction a 14alpha-methyl steroid + 3 reduced [NADPH--hemoprotein reductase] + 3 O2 = a Delta(14) steroid + formate + 3 oxidized [NADPH--hemoprotein reductase] + 4 H2O + 4 H(+). It catalyses the reaction a 14alpha-methyl steroid + reduced [NADPH--hemoprotein reductase] + O2 = a 14alpha-hydroxymethyl steroid + oxidized [NADPH--hemoprotein reductase] + H2O + H(+). The enzyme catalyses a 14alpha-hydroxymethyl steroid + reduced [NADPH--hemoprotein reductase] + O2 = a 14alpha-formyl steroid + oxidized [NADPH--hemoprotein reductase] + 2 H2O + H(+). The catalysed reaction is a 14alpha-formyl steroid + reduced [NADPH--hemoprotein reductase] + O2 = a Delta(14) steroid + formate + oxidized [NADPH--hemoprotein reductase] + H2O + 2 H(+). It carries out the reaction lanosterol + 3 reduced [NADPH--hemoprotein reductase] + 3 O2 = 4,4-dimethyl-5alpha-cholesta-8,14,24-trien-3beta-ol + formate + 3 oxidized [NADPH--hemoprotein reductase] + 4 H2O + 4 H(+). It catalyses the reaction lanosterol + reduced [NADPH--hemoprotein reductase] + O2 = 32-hydroxylanosterol + oxidized [NADPH--hemoprotein reductase] + H2O + H(+). The enzyme catalyses 32-hydroxylanosterol + reduced [NADPH--hemoprotein reductase] + O2 = 32-oxolanosterol + oxidized [NADPH--hemoprotein reductase] + 2 H2O + H(+). The catalysed reaction is 32-oxolanosterol + reduced [NADPH--hemoprotein reductase] + O2 = 4,4-dimethyl-5alpha-cholesta-8,14,24-trien-3beta-ol + formate + oxidized [NADPH--hemoprotein reductase] + H2O + 2 H(+). It functions in the pathway steroid biosynthesis; zymosterol biosynthesis; zymosterol from lanosterol: step 1/6. Sterol 14alpha-demethylase that plays a critical role in the third module of ergosterol biosynthesis pathway, being ergosterol the major sterol component in fungal membranes that participates in a variety of functions. The third module or late pathway involves the ergosterol synthesis itself through consecutive reactions that mainly occur in the endoplasmic reticulum (ER) membrane. Starting from lanosterol (lanosta-8,24-dien-3beta-ol), it catalyzes the three-step oxidative removal of the 14alpha-methyl group (C-32) of the sterol in the form of formate, and converts the sterol to 4,4-dimethyl-5alpha-cholesta-8,14,24-trien-3beta-ol, which is critical for ergosterol biosynthesis. Can demethylate substrates not intrinsic to yeast, such as eburicol (24-methylene-24,25-dihydrolanosterol) at a similar rate to lanosterol, and at a lower rate the 24,25-dihydrolanosterol (DHL) to 4,4-dimethyl-8,14-cholestadien-3beta-ol. This is Lanosterol 14-alpha demethylase CYP51 from Saccharomyces cerevisiae (strain ATCC 204508 / S288c) (Baker's yeast).